The sequence spans 698 residues: RNA cytosine-C(5)-methyltransferase NSUN2 (698 aa).

The span at Met1–Gln10 shows a compositional bias: basic residues. The disordered stretch occupies residues Met1–Glu28. Over residues Arg11–Glu28 the composition is skewed to basic and acidic residues. S-adenosyl-L-methionine-binding positions include Cys182–Lys188, Asp213, Asp240, and Asp266. The active-site Nucleophile is the Cys319. Residues Ala472 to Cys496 form a disordered region. Residues Pro482–Asp493 are compositionally biased toward polar residues.

This sequence belongs to the class I-like SAM-binding methyltransferase superfamily. RsmB/NOP family. TRM4 subfamily.

It is found in the nucleus. The protein localises to the nucleolus. Its subcellular location is the cytoplasm. It localises to the mitochondrion. The protein resides in the cytoskeleton. It is found in the spindle. The protein localises to the secreted. Its subcellular location is the extracellular exosome. The enzyme catalyses cytidine(48) in tRNA + S-adenosyl-L-methionine = 5-methylcytidine(48) in tRNA + S-adenosyl-L-homocysteine + H(+). It carries out the reaction cytidine(49) in tRNA + S-adenosyl-L-methionine = 5-methylcytidine(49) in tRNA + S-adenosyl-L-homocysteine + H(+). It catalyses the reaction cytidine(50) in tRNA + S-adenosyl-L-methionine = 5-methylcytidine(50) in tRNA + S-adenosyl-L-homocysteine + H(+). The catalysed reaction is cytidine(34) in tRNA precursor + S-adenosyl-L-methionine = 5-methylcytidine(34) in tRNA precursor + S-adenosyl-L-homocysteine + H(+). The enzyme catalyses a cytidine in mRNA + S-adenosyl-L-methionine = a 5-methylcytidine in mRNA + S-adenosyl-L-homocysteine + H(+). Its function is as follows. RNA cytosine C(5)-methyltransferase that methylates cytosine to 5-methylcytosine (m5C) in various RNAs, such as tRNAs, mRNAs and some long non-coding RNAs (lncRNAs). Involved in various processes, such as epidermal stem cell differentiation, testis differentiation and maternal to zygotic transition during early development: acts by increasing protein synthesis; cytosine C(5)-methylation promoting tRNA stability and preventing mRNA decay. Methylates cytosine to 5-methylcytosine (m5C) at positions 34 and 48 of intron-containing tRNA(Leu)(CAA) precursors, and at positions 48, 49 and 50 of tRNA(Gly)(GCC) precursors. tRNA methylation is required generation of RNA fragments derived from tRNAs (tRFs). Also mediates C(5)-methylation of mitochondrial tRNAs. Catalyzes cytosine C(5)-methylation of mRNAs, leading to stabilize them and prevent mRNA decay. Cytosine C(5)-methylation of mRNAs also regulates mRNA export. Also mediates cytosine C(5)-methylation of non-coding RNAs, such as vault RNAs (vtRNAs), promoting their processing into regulatory small RNAs. Required for proper spindle assembly and chromosome segregation, independently of its methyltransferase activity. The chain is RNA cytosine-C(5)-methyltransferase NSUN2 from Xenopus laevis (African clawed frog).